Consider the following 545-residue polypeptide: Glutamine-dependent NAD(+) synthetase (545 aa).

The 243-residue stretch at 5–247 folds into the CN hydrolase domain; it reads LRIAMAQFDF…DQWLVVDYMR (243 aa). The active-site Proton acceptor; for glutaminase activity is the E46. Residue K113 is the For glutaminase activity of the active site. Y119 serves as a coordination point for L-glutamine. The active-site Nucleophile; for glutaminase activity is the C151. L-glutamine-binding residues include S177 and K183. Positions 269 to 545 are ligase; that stretch reads VWRAVVRGVQ…RYPISNAYRG (277 aa). Position 292-299 (292-299) interacts with ATP; sequence GLSGGIDS. N375 contacts deamido-NAD(+). T399 serves as a coordination point for ATP. Positions 404 and 516 each coordinate deamido-NAD(+).

This sequence in the C-terminal section; belongs to the NAD synthetase family.

The enzyme catalyses deamido-NAD(+) + L-glutamine + ATP + H2O = L-glutamate + AMP + diphosphate + NAD(+) + H(+). It functions in the pathway cofactor biosynthesis; NAD(+) biosynthesis; NAD(+) from deamido-NAD(+) (L-Gln route): step 1/1. In terms of biological role, catalyzes the ATP-dependent amidation of deamido-NAD to form NAD. Uses L-glutamine as a nitrogen source. In Xylella fastidiosa (strain Temecula1 / ATCC 700964), this protein is Glutamine-dependent NAD(+) synthetase.